Here is a 430-residue protein sequence, read N- to C-terminus: UDP-glucose 6-dehydrogenase AglM (430 aa).

Residue cysteine 269 is part of the active site.

This sequence belongs to the UDP-glucose/GDP-mannose dehydrogenase family.

The catalysed reaction is UDP-alpha-D-glucose + 2 NAD(+) + H2O = UDP-alpha-D-glucuronate + 2 NADH + 3 H(+). The protein operates within nucleotide-sugar biosynthesis; UDP-alpha-D-glucuronate biosynthesis; UDP-alpha-D-glucuronate from UDP-alpha-D-glucose: step 1/1. It functions in the pathway cell surface structure biogenesis; S-layer biogenesis. Activity improves as salinity decreases. Involved in the assembly of a N-linked pentasaccharide that decorates the S-layer glycoprotein and flagellins. Involved in the biosynthesis of the hexuronic acids found at both positions 2 and 3 of the pentasaccharide. The protein is UDP-glucose 6-dehydrogenase AglM (aglM) of Haloferax volcanii (strain ATCC 29605 / DSM 3757 / JCM 8879 / NBRC 14742 / NCIMB 2012 / VKM B-1768 / DS2) (Halobacterium volcanii).